Here is a 120-residue protein sequence, read N- to C-terminus: Spermidine export protein MdtJ (120 aa).

The next 4 helical transmembrane spans lie at 1-21 (MFYW…TLSM), 31-51 (TGFI…SFAV), 54-74 (IALG…ITLF), and 81-101 (EALS…IALI).

This sequence belongs to the drug/metabolite transporter (DMT) superfamily. Small multidrug resistance (SMR) (TC 2.A.7.1) family. MdtJ subfamily. Forms a complex with MdtI.

It localises to the cell inner membrane. Functionally, catalyzes the excretion of spermidine. This Citrobacter koseri (strain ATCC BAA-895 / CDC 4225-83 / SGSC4696) protein is Spermidine export protein MdtJ.